Reading from the N-terminus, the 346-residue chain is Protein NDL1 (346 aa).

It belongs to the NDRG family. As to quaternary structure, interacts with GB1. Interacts with the heterodimers formed by GB1 and GG1, or GB1 and GG2. Interacts with RGS1. As to expression, expressed in root vasculature, cotyledons, leaves, petals, mature stamens and pollen grains.

It is found in the cytoplasm. Its function is as follows. Interacts with the heterotrimeric G protein beta subunit GB1 and plays an significant role in GB1-dependent regulation of lateral root formation. Involved in a signaling pathway that modulates root auxin transport and auxin gradients. Acts partially by positively regulating the auxin carrier PIN2 and AUX1. Acts, together with GB1 as positive regulator of meristem initiation and branching. GB1 and NDL1 positively regulate basipetal inflorescence auxin transport and modulate MAX2 expression in shoots, which regulates organ and lateral meristem formation by the establishment and maintenance of auxin gradients. The chain is Protein NDL1 from Arabidopsis thaliana (Mouse-ear cress).